Here is a 397-residue protein sequence, read N- to C-terminus: Lymphoid enhancer-binding factor 1 (397 aa).

Residues 1–60 (MPQLSGGGGGGDPELCATDEMIPFKDEGDPQKEKIFAEISHPEEEGDLADIKSSLVNESE) form a CTNNB1-binding region. Lys-25 is covalently cross-linked (Glycyl lysine isopeptide (Lys-Gly) (interchain with G-Cter in SUMO)). Residues 38 to 102 (EISHPEEEGD…KHPDGGLYNK (65 aa)) are disordered. A compositionally biased stretch (basic and acidic residues) spans 80 to 96 (PYHDKAREHPDDGKHPD). Phosphoserine is present on Ser-130. Residue Thr-153 is modified to Phosphothreonine; by NLK. Ser-164 bears the Phosphoserine; by NLK mark. Disordered regions lie at residues 164–190 (SPGS…PAPE) and 266–296 (VKQE…KRPH). Lys-267 participates in a covalent cross-link: Glycyl lysine isopeptide (Lys-Gly) (interchain with G-Cter in SUMO). Residues 267–294 (KQEHPHTDSDLMHVKPEHEQRKEQEPKR) show a composition bias toward basic and acidic residues. The HMG box DNA-binding region spans 297–365 (IKKPLNAFML…LHMQLYPGWS (69 aa)). The interval 367–397 (RDNYGKKKKRKREKLQESTSGTGPRMTAAYI) is disordered.

Belongs to the TCF/LEF family. Binds the armadillo repeat of CTNNB1 and forms a stable complex. Interacts with TLE1, PIASG, ALYREF/THOC4, EP300, MDFI and MDFIC. Interacts with DAZAP2. Phosphorylated at Thr-153 and/or Ser-164 by NLK. Phosphorylation by NLK at these sites represses LEF1-mediated transcriptional activation of target genes of the canonical Wnt signaling pathway.

Its subcellular location is the nucleus. In terms of biological role, transcription factor that binds DNA in a sequence-specific manner. Participates in the Wnt signaling pathway. Activates transcription of target genes in the presence of CTNNB1 and EP300. PIASG antagonizes both Wnt-dependent and Wnt-independent activation by LEF1. TLE1, TLE2, TLE3 and TLE4 repress transactivation mediated by LEF1 and CTNNB1. Regulates T-cell receptor alpha enhancer function. Required for IL17A expressing gamma-delta T-cell maturation and development, via binding to regulator loci of BLK to modulate expression. Acts as a positive regulator of odontoblast differentiation during mesenchymal tooth germ formation, expression is repressed during the bell stage by MSX1-mediated inhibition of CTNNB1 signaling. May play a role in hair cell differentiation and follicle morphogenesis. In Rattus norvegicus (Rat), this protein is Lymphoid enhancer-binding factor 1.